The sequence spans 501 residues: Glycerol kinase (501 aa).

T17 provides a ligand contact to ADP. ATP-binding residues include T17, T18, and S19. T17 serves as a coordination point for sn-glycerol 3-phosphate. Residue R21 coordinates ADP. Residues R87, E88, Y139, and D243 each contribute to the sn-glycerol 3-phosphate site. R87, E88, Y139, D243, and Q244 together coordinate glycerol. 2 residues coordinate ADP: T265 and G308. The ATP site is built by T265, G308, Q312, and G409. ADP is bound by residues G409 and N413.

It belongs to the FGGY kinase family.

The enzyme catalyses glycerol + ATP = sn-glycerol 3-phosphate + ADP + H(+). It functions in the pathway polyol metabolism; glycerol degradation via glycerol kinase pathway; sn-glycerol 3-phosphate from glycerol: step 1/1. With respect to regulation, inhibited by fructose 1,6-bisphosphate (FBP). In terms of biological role, key enzyme in the regulation of glycerol uptake and metabolism. Catalyzes the phosphorylation of glycerol to yield sn-glycerol 3-phosphate. The chain is Glycerol kinase from Pseudomonas fluorescens (strain ATCC BAA-477 / NRRL B-23932 / Pf-5).